The chain runs to 483 residues: Glutamyl-tRNA(Gln) amidotransferase subunit A (483 aa).

Residues Lys77 and Ser152 each act as charge relay system in the active site. Ser176 (acyl-ester intermediate) is an active-site residue.

This sequence belongs to the amidase family. GatA subfamily. Heterotrimer of A, B and C subunits.

It carries out the reaction L-glutamyl-tRNA(Gln) + L-glutamine + ATP + H2O = L-glutaminyl-tRNA(Gln) + L-glutamate + ADP + phosphate + H(+). Allows the formation of correctly charged Gln-tRNA(Gln) through the transamidation of misacylated Glu-tRNA(Gln) in organisms which lack glutaminyl-tRNA synthetase. The reaction takes place in the presence of glutamine and ATP through an activated gamma-phospho-Glu-tRNA(Gln). The protein is Glutamyl-tRNA(Gln) amidotransferase subunit A of Listeria monocytogenes serovar 1/2a (strain ATCC BAA-679 / EGD-e).